The primary structure comprises 414 residues: Proton/glutamate-aspartate symporter (414 aa).

The Cytoplasmic portion of the chain corresponds to 1-3; it reads MKK. The chain crosses the membrane as a helical span at residues 4–24; that stretch reads LIAFQILIALAVGAVIGHFFP. Residues 25 to 42 are Extracellular-facing; that stretch reads DFGMALRPVGDGFIRLIK. Residues 43 to 63 traverse the membrane as a helical segment; sequence MIVVPIVFSTIVIGAAGSGSM. Residues 64–73 are Cytoplasmic-facing; it reads KKMGSLGIKT. The helical transmembrane segment at 74–94 threads the bilayer; that stretch reads IIWFEVITTLVLGLGLLLANV. Residues 95–144 lie on the Extracellular side of the membrane; the sequence is LKPGVGLDLSHLAKKDIHELSGYTDKVVDFKQMILDIIPTNIIDVMARND. The helical transmembrane segment at 145–165 threads the bilayer; sequence LLAVIFFAILFGVAAAGIGKA. The Cytoplasmic segment spans residues 166-182; sequence SEPVMKFFESTAQIMFK. The helical transmembrane segment at 183–203 threads the bilayer; the sequence is LTQIVMVTAPIGVLALMAASV. Topologically, residues 204–219 are extracellular; that stretch reads GQYGIELLLPMFKLVG. The helical transmembrane segment at 220 to 240 threads the bilayer; sequence TVFLGLFLILFVLFPLVGLIF. A topological domain (cytoplasmic) is located at residue Gln-241. A helical membrane pass occupies residues 242-262; the sequence is IKYFEVLKMIWDLFLIAFSTT. Residues 263 to 300 lie on the Extracellular side of the membrane; it reads STETILPQLMDRMEKYGCPKRVVSFVVPSGLSLNCDGS. The helical transmembrane segment at 301–321 threads the bilayer; it reads SLYLSVSCIFLAQAFQVDMTL. At 322 to 324 the chain is on the cytoplasmic side; that stretch reads SQQ. 2 helical membrane-spanning segments follow: residues 325-345 and 346-366; these read LLMM…PSGS and LVVL…VAII. The Cytoplasmic segment spans residues 367–414; the sequence is AGVDRVMDMARTGVNVPGHAIACIVVSKWEKAFRQKEWVSANSQTESI.

Belongs to the dicarboxylate/amino acid:cation symporter (DAACS) (TC 2.A.23) family.

It localises to the cell membrane. Glutamate uptake is inhibited by beta-hydroxyaspartate and cysteic acid. In terms of biological role, catalyzes the proton-dependent, binding-protein-independent transport of glutamate and aspartate. The polypeptide is Proton/glutamate-aspartate symporter (Bacillus subtilis (strain 168)).